The chain runs to 407 residues: Argininosuccinate synthase (407 aa).

Residues 16–24 and Ala-44 contribute to the ATP site; that span reads AYSGGLDTS. L-citrulline-binding residues include Tyr-96 and Ser-101. Position 126 (Gly-126) interacts with ATP. The L-aspartate site is built by Thr-128, Asn-132, and Asp-133. An L-citrulline-binding site is contributed by Asn-132. The L-citrulline site is built by Arg-136, Ser-185, Ser-194, Glu-270, and Tyr-282.

It belongs to the argininosuccinate synthase family. Type 1 subfamily. As to quaternary structure, homotetramer.

It localises to the cytoplasm. It catalyses the reaction L-citrulline + L-aspartate + ATP = 2-(N(omega)-L-arginino)succinate + AMP + diphosphate + H(+). The protein operates within amino-acid biosynthesis; L-arginine biosynthesis; L-arginine from L-ornithine and carbamoyl phosphate: step 2/3. This chain is Argininosuccinate synthase, found in Shewanella putrefaciens (strain CN-32 / ATCC BAA-453).